The sequence spans 965 residues: Argonaute protein wago-4 (965 aa).

The disordered stretch occupies residues 1–34; that stretch reads MPALPPVYTPSGAPSSVHAPPAVPPVPVPTQPLR. Low complexity predominate over residues 10–20; that stretch reads PSGAPSSVHAP. Positions 21–30 are enriched in pro residues; that stretch reads PAVPPVPVPT. The PAZ domain occupies 318-428; the sequence is PILDKLKEIT…YPMELLKISS (111 aa). One can recognise a Piwi domain in the interval 594-924; the sequence is TFVFIITDDS…YAKRGRNLWN (331 aa).

The protein belongs to the argonaute family. WAGO subfamily. Interacts with znfx-1; the interaction promotes the transmission of epigenetic information across generations. May interact with mina-1. In terms of tissue distribution, expressed in the hermaphrodite germline and in oocytes. Expressed at a low level in the male germline. Not expressed in the soma of hermaphrodites or males.

It localises to the cytoplasm. Its subcellular location is the perinuclear region. It is found in the cytoplasmic granule. Argonaute protein which is involved in the endogenous small interfering RNA (endo-siRNA) pathway and is required for RNA-mediated gene silencing (RNAi) in the germline. Interacts with secondary 22G-RNAs, which are RNA-dependent RNA polymerase-derived endo-siRNAs, typically 22 nucleotides in length with a 5'guanosine residue. Also interacts with the mRNA targets of 22G-RNAs. Associates with znfx-1 to mediate small RNA-directed transgenerational epigenetic inheritance of both germline- and soma-expressed genes. The polypeptide is Argonaute protein wago-4 (Caenorhabditis elegans).